Consider the following 354-residue polypeptide: UDP-N-acetylglucosamine--N-acetylmuramyl-(pentapeptide) pyrophosphoryl-undecaprenol N-acetylglucosamine transferase 1 (354 aa).

Residues 12-14, R163, S193, and Q287 contribute to the UDP-N-acetyl-alpha-D-glucosamine site; that span reads TAG.

Belongs to the glycosyltransferase 28 family. MurG subfamily.

The protein localises to the cell membrane. The enzyme catalyses di-trans,octa-cis-undecaprenyl diphospho-N-acetyl-alpha-D-muramoyl-L-alanyl-D-glutamyl-meso-2,6-diaminopimeloyl-D-alanyl-D-alanine + UDP-N-acetyl-alpha-D-glucosamine = di-trans,octa-cis-undecaprenyl diphospho-[N-acetyl-alpha-D-glucosaminyl-(1-&gt;4)]-N-acetyl-alpha-D-muramoyl-L-alanyl-D-glutamyl-meso-2,6-diaminopimeloyl-D-alanyl-D-alanine + UDP + H(+). It participates in cell wall biogenesis; peptidoglycan biosynthesis. Its function is as follows. Cell wall formation. Catalyzes the transfer of a GlcNAc subunit on undecaprenyl-pyrophosphoryl-MurNAc-pentapeptide (lipid intermediate I) to form undecaprenyl-pyrophosphoryl-MurNAc-(pentapeptide)GlcNAc (lipid intermediate II). The protein is UDP-N-acetylglucosamine--N-acetylmuramyl-(pentapeptide) pyrophosphoryl-undecaprenol N-acetylglucosamine transferase 1 of Bacillus thuringiensis (strain Al Hakam).